The sequence spans 606 residues: Prostaglandin G/H synthase 1 (606 aa).

Positions 1–30 are cleaved as a signal peptide; the sequence is MSRSSPSLRLPVLLLLLLLLLLPPPPPVLP. Residues 38 to 76 form the EGF-like domain; it reads PVNPCCYFPCQHQGVCVRVALDRYQCDCTRTGYSGPNCT. 4 cysteine pairs are disulfide-bonded: Cys-42–Cys-53, Cys-43–Cys-165, Cys-47–Cys-63, and Cys-65–Cys-75. N-linked (GlcNAc...) asparagine glycans are attached at residues Asn-74, Asn-110, and Asn-150. The active-site Proton acceptor is the His-213. Tyr-391 functions as the For cyclooxygenase activity in the catalytic mechanism. His-394 is a heme b binding site. Asn-416 carries N-linked (GlcNAc...) asparagine glycosylation. A disulfide bridge links Cys-575 with Cys-581.

This sequence belongs to the prostaglandin G/H synthase family. Homodimer. Heme b is required as a cofactor.

The protein localises to the microsome membrane. Its subcellular location is the endoplasmic reticulum membrane. It catalyses the reaction (5Z,8Z,11Z,14Z)-eicosatetraenoate + AH2 + 2 O2 = prostaglandin H2 + A + H2O. The catalysed reaction is (5Z,8Z,11Z,14Z)-eicosatetraenoate + 2 O2 = prostaglandin G2. It carries out the reaction prostaglandin G2 + AH2 = prostaglandin H2 + A + H2O. The enzyme catalyses (9Z,12Z)-octadecadienoate + AH2 + O2 = (9R)-hydroxy-(10E,12Z)-octadecadienoate + A + H2O. It catalyses the reaction (9Z,12Z)-octadecadienoate + AH2 + O2 = (9S)-hydroxy-(10E,12Z)-octadecadienoate + A + H2O. The catalysed reaction is (9Z,12Z)-octadecadienoate + AH2 + O2 = (13S)-hydroxy-(9Z,11E)-octadecadienoate + A + H2O. It carries out the reaction (9Z,12Z)-octadecadienoate + AH2 + O2 = (13R)-hydroxy-(9Z,11E)-octadecadienoate + A + H2O. Its pathway is lipid metabolism; prostaglandin biosynthesis. Its activity is regulated as follows. The cyclooxygenase activity is inhibited by nonsteroidal anti-inflammatory drugs (NSAIDs) including ibuprofen, flurbiprofen, ketoprofen, naproxen, flurbiprofen, anirolac, fenclofenac and diclofenac. In terms of biological role, dual cyclooxygenase and peroxidase that plays an important role in the biosynthesis pathway of prostanoids, a class of C20 oxylipins mainly derived from arachidonate ((5Z,8Z,11Z,14Z)-eicosatetraenoate, AA, C20:4(n-6)), with a particular role in the inflammatory response. The cyclooxygenase activity oxygenates AA to the hydroperoxy endoperoxide prostaglandin G2 (PGG2), and the peroxidase activity reduces PGG2 to the hydroxy endoperoxide prostaglandin H2 (PGH2), the precursor of all 2-series prostaglandins and thromboxanes. This complex transformation is initiated by abstraction of hydrogen at carbon 13 (with S-stereochemistry), followed by insertion of molecular O2 to form the endoperoxide bridge between carbon 9 and 11 that defines prostaglandins. The insertion of a second molecule of O2 (bis-oxygenase activity) yields a hydroperoxy group in PGG2 that is then reduced to PGH2 by two electrons. Involved in the constitutive production of prostanoids in particular in the stomach and platelets. In gastric epithelial cells, it is a key step in the generation of prostaglandins, such as prostaglandin E2 (PGE2), which plays an important role in cytoprotection. In platelets, it is involved in the generation of thromboxane A2 (TXA2), which promotes platelet activation and aggregation, vasoconstriction and proliferation of vascular smooth muscle cells. Can also use linoleate (LA, (9Z,12Z)-octadecadienoate, C18:2(n-6)) as substrate and produce hydroxyoctadecadienoates (HODEs) in a regio- and stereospecific manner, being (9R)-HODE ((9R)-hydroxy-(10E,12Z)-octadecadienoate) and (13S)-HODE ((13S)-hydroxy-(9Z,11E)-octadecadienoate) its major products. This is Prostaglandin G/H synthase 1 (PTGS1) from Oryctolagus cuniculus (Rabbit).